The sequence spans 166 residues: Nicotine metabolites export pump subunit NepB (166 aa).

The next 4 helical transmembrane spans lie at Leu51–Leu71, Phe77–Leu97, Val108–Ile128, and Val133–Leu153.

The protein belongs to the drug/metabolite transporter (DMT) superfamily. Small multidrug resistance (SMR) (TC 2.A.7.1) family. NepA/NepB subfamily. The efflux pump is composed of NepA and NepB.

It localises to the cell membrane. In terms of biological role, component of an efflux pump responsible for the transport of nicotine breakdown products, in particular methylamine, out of the cell. This pump apparently serves as a metabolic valve for nicotine catabolites and may protect the bacteria from the potentially toxic side effects of these compounds. In Paenarthrobacter nicotinovorans (Arthrobacter nicotinovorans), this protein is Nicotine metabolites export pump subunit NepB (nepB).